The chain runs to 1895 residues: Probable WRKY transcription factor 19 (1895 aa).

Residues 1–85 (MSEKEELPLT…SGSGLSQQLN (85 aa)) form a disordered region. Residues 10 to 22 (TLTSIGAATATSD) show a composition bias toward polar residues. Positions 28–39 (GSSGEGISSSSS) are enriched in low complexity. The span at 46–62 (MQNSPTGLMISQSSSMC) shows a compositional bias: polar residues. Residues 75–85 (SSGSGLSQQLN) are compositionally biased toward low complexity. The PAH domain occupies 291–371 (RPLTIDGGGN…LGFNTYLSKE (81 aa)). The segment covering 408–417 (ANMQPQTEYP) has biased composition (polar residues). Disordered regions lie at residues 408–442 (ANMQ…SSLL), 517–538 (YKDR…TYLS), and 580–620 (EASD…ADAS). Low complexity predominate over residues 418-427 (SSSAVQSFSS). Residues 428-442 (GQPQIPTSAPDSSLL) are compositionally biased toward polar residues. A DNA-binding region (WRKY 1) is located at residues 462 to 526 (NVDKQVNDGY…YKDRHNHEPP (65 aa)). Residues 635–700 (SEVDNLDDGY…SLCRRGISVY (66 aa)) constitute a DNA-binding region (WRKY 2). The TIR domain maps to 666–808 (KDYDVVIRYG…EIVRDALKVL (143 aa)). Residues 800–1087 (IVRDALKVLC…LDGCGFSAHV (288 aa)) form the NB-ARC domain. An ATP-binding site is contributed by 844–851 (GTVGIGKT). 10 LRR repeats span residues 1206 to 1227 (KLRL…FNPE), 1228 to 1249 (NLVE…KKAR), 1259 to 1281 (KLKK…SSAT), 1282 to 1304 (NLEH…ISYL), 1306 to 1328 (KLVF…VDLE), 1329 to 1351 (SLEV…SPNV), 1352 to 1371 (KELY…IKNL), 1373 to 1395 (LLEK…IYKL), 1397 to 1419 (HLET…SRRM), and 1421 to 1442 (CLRF…ISYL). A disordered region spans residues 1562-1583 (ETVAPPSSSSEAREEEVETEET). Residues 1626-1877 (WQKGQLLGRG…AAELLNHPFV (252 aa)) enclose the Protein kinase domain. Residues 1632–1640 (LGRGSLGSV) and K1654 each bind ATP. Residue D1758 is part of the active site.

This sequence belongs to the disease resistance X-TIR-NB-LRR-X family.

It localises to the nucleus. Transcription factor. Interacts specifically with the W box (5'-(T)TGAC[CT]-3'), a frequently occurring elicitor-responsive cis-acting element. May act also as a disease resistance protein with a serine/threonine-protein kinase activity. The chain is Probable WRKY transcription factor 19 (WRKY19) from Arabidopsis thaliana (Mouse-ear cress).